The primary structure comprises 238 residues: Ribonuclease PH (238 aa).

Residues arginine 86 and 124–126 contribute to the phosphate site; that span reads GTR.

This sequence belongs to the RNase PH family. In terms of assembly, homohexameric ring arranged as a trimer of dimers.

It carries out the reaction tRNA(n+1) + phosphate = tRNA(n) + a ribonucleoside 5'-diphosphate. Functionally, phosphorolytic 3'-5' exoribonuclease that plays an important role in tRNA 3'-end maturation. Removes nucleotide residues following the 3'-CCA terminus of tRNAs; can also add nucleotides to the ends of RNA molecules by using nucleoside diphosphates as substrates, but this may not be physiologically important. Probably plays a role in initiation of 16S rRNA degradation (leading to ribosome degradation) during starvation. This is Ribonuclease PH from Pasteurella multocida (strain Pm70).